We begin with the raw amino-acid sequence, 454 residues long: MTNGDSSSSALTDNERAVLDDIEAQGIDFLRLQFTDILGTVKNVSIPAHQAEKAFTEGIYFDGSSIEGFVRIQESDMRLDPDPETFAVLPWRSNGDGGSARLICDVVDREGNAFAGGPRQVLKNVLARADDMGYSVSIGPEPEFFLFEKDDDGNATTTAHDQGGYFDLAPKDLASDIRREIIFTLEAMGFEIEASHHEVARGQHEINFKYDDALTTADNIATFRAVVRAVAEQHDVHATFMPKPIGEINGSGMHSHISLFDEDGENVFADNDDEFNLSETAYQFMGGVLEHAPAFTAVTNPTVNSYKRLVPGYEAPVYIAWSGVNRSALIRVPDAAGVSARFEIRSPDPSCNPYLALAAVIAAGLDGIDTDADPGDAVREDIYEFDEDKRDAYGIDTLPGHLGDAVTALESDPVMQDALGEHVCEKFAEAKRHEYAEYKASVSEWETDRYLEKF.

A GS beta-grasp domain is found at 25–111; sequence QGIDFLRLQF…LICDVVDREG (87 aa). Residues 118-454 enclose the GS catalytic domain; that stretch reads PRQVLKNVLA…WETDRYLEKF (337 aa). Mg(2+) contacts are provided by glutamate 141 and glutamate 143. An ATP-binding site is contributed by glutamate 193. Positions 198 and 205 each coordinate Mg(2+). Residues 249 to 250 and glycine 250 contribute to the L-glutamate site; that span reads NG. Position 254 (histidine 254) interacts with Mg(2+). ATP is bound by residues 256-258 and serine 258; that span reads HIS. The L-glutamate site is built by arginine 308, glutamate 314, and arginine 326. ATP-binding residues include arginine 326 and arginine 331. Glutamate 343 provides a ligand contact to Mg(2+). L-glutamate is bound at residue arginine 345.

This sequence belongs to the glutamine synthetase family. Oligomer of 12 subunits arranged in the form of two hexagons. In its feedback-inhibited form, interacts with TnrA in order to block its DNA-binding activity. Mg(2+) is required as a cofactor.

The protein resides in the cytoplasm. The catalysed reaction is L-glutamate + NH4(+) + ATP = L-glutamine + ADP + phosphate + H(+). Its activity is regulated as follows. Inhibited by glutamine. Glutamine synthetase (GS) is an unusual multitasking protein that functions as an enzyme, a transcription coregulator, and a chaperone in ammonium assimilation and in the regulation of genes involved in nitrogen metabolism. It catalyzes the ATP-dependent biosynthesis of glutamine from glutamate and ammonia. Feedback-inhibited GlnA also interacts with and regulates the activity of the transcriptional regulator TnrA. During nitrogen limitation, TnrA is in its DNA-binding active state and turns on the transcription of genes required for nitrogen assimilation. Under conditions of nitrogen excess, feedback-inhibited GlnA forms a stable complex with TnrA, which inhibits its DNA-binding activity. In contrast, feedback-inhibited GlnA acts as a chaperone to stabilize the DNA-binding activity of GlnR, which represses the transcription of nitrogen assimilation genes. This Halobacterium salinarum (strain ATCC 700922 / JCM 11081 / NRC-1) (Halobacterium halobium) protein is Glutamine synthetase.